A 179-amino-acid polypeptide reads, in one-letter code: Orotate phosphoribosyltransferase (179 aa).

5-phospho-alpha-D-ribose 1-diphosphate is bound by residues R94, K95, K98, H100, and 120-128; that span reads EDTSTTGNS. Orotate-binding residues include T124 and R152.

This sequence belongs to the purine/pyrimidine phosphoribosyltransferase family. PyrE subfamily. In terms of assembly, homodimer. Mg(2+) is required as a cofactor.

The catalysed reaction is orotidine 5'-phosphate + diphosphate = orotate + 5-phospho-alpha-D-ribose 1-diphosphate. The protein operates within pyrimidine metabolism; UMP biosynthesis via de novo pathway; UMP from orotate: step 1/2. Functionally, catalyzes the transfer of a ribosyl phosphate group from 5-phosphoribose 1-diphosphate to orotate, leading to the formation of orotidine monophosphate (OMP). This chain is Orotate phosphoribosyltransferase, found in Mycobacterium avium (strain 104).